Reading from the N-terminus, the 902-residue chain is Calcium-activated chloride channel regulator 3A-1 (902 aa).

The signal sequence occupies residues 1-21; that stretch reads MVPGLQVLLFLTLHLLQNTES. The metalloprotease domain stretch occupies residues 45–199; it reads DERLIPSIKE…RITGTNVVHN (155 aa). Asn-75 is a glycosylation site (N-linked (GlcNAc...) asparagine). A Zn(2+)-binding site is contributed by His-155. Glu-156 is an active-site residue. Residues His-159 and Asp-166 each coordinate Zn(2+). In terms of domain architecture, VWFA spans 308 to 476; the sequence is VVCLVLDKSG…NSLIDAFSRI (169 aa). N-linked (GlcNAc...) asparagine glycosylation is found at Asn-504, Asn-515, Asn-630, Asn-687, Asn-697, Asn-809, and Asn-814.

This sequence belongs to the CLCR family. In terms of assembly, part of a complex composed of complement component C3, CLCA1/CLCA3, A2ML1/OH and ALB/serum albumin. Glycosylated. In terms of processing, the 130-kDa product is autoproteolytically processed by the metalloprotease domain and yields two subunits, a 90-kDa protein and a group of 32- to 38-kDa proteins. The cleavage is necessary for calcium-activated chloride channel (CaCC) activation activity. In terms of tissue distribution, highly expressed in skin and spleen, and at lower levels in kidney and liver. Also detected in lung and brain. Not detected in lung or brain. In lung, localizes to respiratory epithelia of the bronchi and trachea and the submucosal glands.

The protein resides in the cell membrane. Plays a role in modulating chloride current across the plasma membrane in a calcium-dependent manner. This chain is Calcium-activated chloride channel regulator 3A-1, found in Mus musculus (Mouse).